A 576-amino-acid chain; its full sequence is Sulfite reductase [NADPH] hemoprotein beta-component (576 aa).

[4Fe-4S] cluster-binding residues include cysteine 439, cysteine 445, cysteine 485, and cysteine 489. Residue cysteine 489 coordinates siroheme.

The protein belongs to the nitrite and sulfite reductase 4Fe-4S domain family. As to quaternary structure, alpha(8)-beta(8). The alpha component is a flavoprotein, the beta component is a hemoprotein. Siroheme serves as cofactor. Requires [4Fe-4S] cluster as cofactor.

It catalyses the reaction hydrogen sulfide + 3 NADP(+) + 3 H2O = sulfite + 3 NADPH + 4 H(+). It participates in sulfur metabolism; hydrogen sulfide biosynthesis; hydrogen sulfide from sulfite (NADPH route): step 1/1. Functionally, component of the sulfite reductase complex that catalyzes the 6-electron reduction of sulfite to sulfide. This is one of several activities required for the biosynthesis of L-cysteine from sulfate. The polypeptide is Sulfite reductase [NADPH] hemoprotein beta-component (Aliivibrio fischeri (strain ATCC 700601 / ES114) (Vibrio fischeri)).